Reading from the N-terminus, the 607-residue chain is Cytosolic Fe-S cluster assembly factor nar1 (607 aa).

Residue Cys-20 participates in [4Fe-4S] cluster binding. Positions Pro-28–Val-47 are disordered. The segment covering Lys-29 to Glu-40 has biased composition (polar residues). Cys-62, Cys-65, Cys-68, Cys-214, and Cys-269 together coordinate [4Fe-4S] cluster. Residues Ala-439–Ala-461 form a disordered region. Over residues Gln-452 to Ala-461 the composition is skewed to polar residues. Positions 475 and 479 each coordinate [4Fe-4S] cluster. The span at Ala-494 to Glu-505 shows a compositional bias: polar residues. Positions Ala-494–His-513 are disordered.

The protein belongs to the NARF family.

Its function is as follows. Component of the cytosolic Fe/S protein assembly machinery. Required for maturation of extramitochondrial Fe/S proteins. May play a role in the transfer of pre-assembled Fe/S clusters to target apoproteins. The chain is Cytosolic Fe-S cluster assembly factor nar1 (nar1) from Aspergillus oryzae (strain ATCC 42149 / RIB 40) (Yellow koji mold).